A 406-amino-acid polypeptide reads, in one-letter code: Argininosuccinate synthase (406 aa).

ATP-binding positions include 13–21 and Ala40; that span reads AYSGGLDTS. 2 residues coordinate L-citrulline: Tyr91 and Ser96. Residue Gly121 participates in ATP binding. L-aspartate-binding residues include Thr123, Asn127, and Asp128. Position 127 (Asn127) interacts with L-citrulline. 5 residues coordinate L-citrulline: Arg131, Ser182, Ser191, Glu267, and Tyr279.

This sequence belongs to the argininosuccinate synthase family. Type 1 subfamily. Homotetramer.

The protein localises to the cytoplasm. The catalysed reaction is L-citrulline + L-aspartate + ATP = 2-(N(omega)-L-arginino)succinate + AMP + diphosphate + H(+). The protein operates within amino-acid biosynthesis; L-arginine biosynthesis; L-arginine from L-ornithine and carbamoyl phosphate: step 2/3. This chain is Argininosuccinate synthase, found in Brucella abortus (strain S19).